Consider the following 1843-residue polypeptide: GTPase-activating protein CdGAPr (1843 aa).

A disordered region spans residues 94-117 (ASTESSCSPPIQGAVPPPKPSRHM). S166, S168, and S180 each carry phosphoserine. Residues 295 to 363 (PAVGAAYGVR…PQSCVATIGD (69 aa)) enclose the SH3 domain. Residues 424–618 (CDLSEHLLNS…YLIRNCHNIF (195 aa)) form the Rho-GAP domain. Residues 746–780 (PRSWQKRKPDKTPSWKSIFSRSQRQGNPDPGQKIT) are disordered. Over residues 759–771 (SWKSIFSRSQRQG) the composition is skewed to polar residues. Phosphoserine is present on residues S837 and S840. Position 843 is a phosphothreonine (T843). Phosphoserine is present on residues S851, S861, S872, and S876. Disordered stretches follow at residues 894–975 (ESES…GHES) and 1013–1106 (ASVE…RVEP). Over residues 928 to 939 (FSSQTNSVNPSP) the composition is skewed to polar residues. S1029 bears the Phosphoserine mark. Positions 1029–1053 (SPISSSNGASVGSSSSSTRYSYPSV) are enriched in low complexity. The span at 1058-1069 (KRKEQQDAKERF) shows a compositional bias: basic and acidic residues. The segment covering 1071 to 1097 (YQGTFTQPGQKQESSAPRPVHSTNNGA) has biased composition (polar residues). 2 positions are modified to phosphothreonine: T1118 and T1121. A phosphoserine mark is found at S1125, S1216, S1281, and S1284. Positions 1378–1404 (YKAAEMTQQLLQLEQEHHDHEEQQEKE) form a coiled coil. S1453 and S1456 each carry phosphoserine. T1679 is modified (phosphothreonine). Disordered regions lie at residues 1721 to 1745 (TGGG…LGQQ) and 1779 to 1829 (TAQK…QFSI). The segment covering 1779-1790 (TAQKYGSTSKTP) has biased composition (polar residues). Residues 1793–1806 (KFERSQPMPRDRLQ) are compositionally biased toward basic and acidic residues. The span at 1807–1818 (RNSLAESNAGTN) shows a compositional bias: polar residues.

As to expression, ubiquitously expressed.

Its function is as follows. Probably functions as a GTPase-activating protein (GAP) for RAC1 and/or CDC42. Required for optic stalk formation. The polypeptide is GTPase-activating protein CdGAPr (CdGAPr) (Drosophila melanogaster (Fruit fly)).